Reading from the N-terminus, the 600-residue chain is MTTSESSATSSVKIYFRLLSYVRPYVGIFLLSIIGFVIFASTQPMLAGILKYFVDGLTNPEAVLFPNVPYLRELQLLQAVPLLIVLIAAWQGLGSFLGNYFLAKVSLGLVHDLRVELFNKLLVLPNRYFDTTNSGHLISRITFNVTMVTGAATDAIKVVIREGLTVVFLFIYLLMMNWKLTLVMLAILPLIAVMVGTASKKFRKQSKKIQVAMGDVTHVASETIQGYRVVRSFGGEAYEQARFAQASNSNTQKQLRMTKTGAIYTPMLQLVIYSAMAVLMFLVLFLRGEATAGDLVAYITAAGLLPKPIRQLSEVSSTIQKGVAGAESIFEQLDVEEEVDTGTIERERVTGHLEVKNLSFFYPQTARQVLNDISFSAAPGQMIALVGRSGSGKSTLANLIPRFYGHDIGNILLDGVEINDYRLRNLRRHIAQVNQNVTLFNDTIANNIAYGDLAGAPRADIEAAAADAYAREFIDQLPQGFDTQVGENGVLLSGGQRQRLAIARALLKNAPLLILDEATSALDTESERHIQAALDHVMKGRTTLVIAHRLSTIEKADLILVMDAGQIVERGTHTELLAQNGYYARLHAMGLDEPAPVGAV.

The next 4 helical transmembrane spans lie at 26 to 46 (VGIF…QPML), 82 to 102 (LLIV…NYFL), 167 to 187 (VFLF…MLAI), and 266 to 286 (PMLQ…VLFL). The ABC transmembrane type-1 domain occupies 30 to 321 (LLSIIGFVIF…LSEVSSTIQK (292 aa)). Positions 353-589 (LEVKNLSFFY…NGYYARLHAM (237 aa)) constitute an ABC transporter domain. Position 387 to 394 (387 to 394 (GRSGSGKS)) interacts with ATP.

This sequence belongs to the ABC transporter superfamily. Lipid exporter (TC 3.A.1.106) family. In terms of assembly, homodimer.

The protein resides in the cell inner membrane. The enzyme catalyses ATP + H2O + lipid A-core oligosaccharideSide 1 = ADP + phosphate + lipid A-core oligosaccharideSide 2.. Functionally, involved in lipopolysaccharide (LPS) biosynthesis. Translocates lipid A-core from the inner to the outer leaflet of the inner membrane. Transmembrane domains (TMD) form a pore in the inner membrane and the ATP-binding domain (NBD) is responsible for energy generation. In Pseudomonas syringae pv. syringae (strain B728a), this protein is ATP-dependent lipid A-core flippase.